A 120-amino-acid chain; its full sequence is Large ribosomal subunit protein uL18 (120 aa).

It belongs to the universal ribosomal protein uL18 family. As to quaternary structure, part of the 50S ribosomal subunit; part of the 5S rRNA/L5/L18/L25 subcomplex. Contacts the 5S and 23S rRNAs.

In terms of biological role, this is one of the proteins that bind and probably mediate the attachment of the 5S RNA into the large ribosomal subunit, where it forms part of the central protuberance. The chain is Large ribosomal subunit protein uL18 from Synechococcus elongatus (strain ATCC 33912 / PCC 7942 / FACHB-805) (Anacystis nidulans R2).